The chain runs to 314 residues: PDCD10 and GCKIII kinases-associated protein 1 (314 aa).

Ser30 bears the Phosphoserine mark. Positions 36 to 142 are disordered; sequence DDTDKLKGKW…TQPFLEGGGT (107 aa). Thr106 carries the post-translational modification Phosphothreonine. Over residues 107–116 the composition is skewed to polar residues; the sequence is PQPTGNSSPT. Residues Ser238 and Ser241 each carry the phosphoserine modification. Positions 267–291 are disordered; sequence VDSGNRQEDTHGSDGDGDGEIVDED. Positions 271–280 are enriched in basic and acidic residues; it reads NRQEDTHGSD. A compositionally biased stretch (acidic residues) spans 281-291; the sequence is GDGDGEIVDED.

In terms of assembly, interacts with KEAP1; this interaction prevents the ubiquitination of KEAP1 by TRIM25, thus protecting KEAP1 from degradation. Found in association with PDCD10 and members of the STE20 kinases, such as STK24, STK25 and STK26.

The protein localises to the cell membrane. Functionally, acts as a tumor suppressor. Acts as a tumor suppressor for colorectal cancer cell proliferation by targeting KEAP1/USP17/ELK1/CDK6 axis. The protein is PDCD10 and GCKIII kinases-associated protein 1 of Homo sapiens (Human).